The primary structure comprises 404 residues: Glycosyltransferase GlyB (404 aa).

The segment at 1–267 (MNTKSIVFNA…ILLRKDIISR (267 aa)) is GT8 domain. UDP-binding positions include 9–14 (NADNDY) and 103–104 (DS). 3 residues coordinate Mn(2+): Asp103, Asp105, and His228. Residue 228–233 (HYTGVK) participates in UDP binding.

In the N-terminal section; belongs to the glycosyltransferase 8 family.

Functionally, may be involved in the polymorphic O-glycosylation of the serine-rich repeat protein PsrP. Has equal hydrolytic activity against both UDP-galactose and UDP-glucose; no glycosyltransferase activity has been seen with tested substrates. This Streptococcus pneumoniae serotype 4 (strain ATCC BAA-334 / TIGR4) protein is Glycosyltransferase GlyB.